The chain runs to 153 residues: Putative pre-16S rRNA nuclease (153 aa).

The protein belongs to the YqgF nuclease family.

The protein resides in the cytoplasm. Functionally, could be a nuclease involved in processing of the 5'-end of pre-16S rRNA. The sequence is that of Putative pre-16S rRNA nuclease from Prochlorococcus marinus (strain MIT 9215).